We begin with the raw amino-acid sequence, 775 residues long: MLARRVVAALLLWLSCCVSALWRYYINSQDYSIFSTRSSIKLEYEGNSFVSWKIPESCKVENNTSPKTTLHCKRAGIHTIEPIARNQEVERHLTVDNSYICYLWYFTVVDVYYNLSQIVTIWVYDPESASTEELIRTAKKPSLIVTIWVYDPESASTEELIWTAKKPSLNSLVLTKQMNTLGQRPFIFTVEKRLAYHPGPLTSEGTWVIHLPMSTDDIAKVIQGNNVDFQDCRIADLHFLLTFPMEIVLEPPGYLPLTLPPGSPLMLSWDTCISTFALLATDQETFQTNDSFQTWTRVRAPPGILSDAQRHSLRDVLVFRTGILFLVETTVYLKTDNEFIKLDKSRGISETGILGLSKRRWCQIRYLYKSAAGRTFVLAWTKSEVYGGFGKFKFMRFTTTSRLKYLLKLPPTDTLEIITVEYSWHPLEAAALLSHCSVCTTTKNIRMVIFNSAYFSWKLQDFELQVPKEAKLEYRFLYSAMPDIIVWDEHQVYYGYRNFAVFGTITTASGETNLSSLSQGSNIHQVLTDSIGNVVVKMENNVMFYIKADITEAVILHTWVNTTAKTGLFFDKSFEVCILYYNENLDEKYQLQTQPYPLILELQSINKDLGDWCPYLAFQHNIHSQFYHMDKGESLTIWSQIVYPENRGLYIVLEHYGMRILTWTQNIEYEIASGFCTKTLITRFFQTTNYELVDNYYQLQKENTGLLVFQFRPSEFSRMCPTAKPVFEIDVGCDSSKHIMVQGFNRSGCQRRDFSYVIDKELLRESLSDNLVRNL.

The signal sequence occupies residues methionine 1–alanine 20. Residues asparagine 62 and asparagine 114 are each glycosylated (N-linked (GlcNAc...) asparagine).

This sequence belongs to the CATSPERD family.

In Mus musculus (Mouse), this protein is Cation channel sperm-associated protein subunit epsilon-like protein.